A 140-amino-acid chain; its full sequence is Fluoride-specific ion channel FluC 2 (140 aa).

The next 4 helical transmembrane spans lie at 7–27 (VPPL…LGAL), 45–65 (WATF…MVLV), 77–97 (PFAG…GLEI), and 106–126 (VLEA…GVVL). Na(+)-binding residues include Gly-85 and Thr-88.

It belongs to the fluoride channel Fluc/FEX (TC 1.A.43) family.

Its subcellular location is the cell membrane. The enzyme catalyses fluoride(in) = fluoride(out). Na(+) is not transported, but it plays an essential structural role and its presence is essential for fluoride channel function. Fluoride-specific ion channel. Important for reducing fluoride concentration in the cell, thus reducing its toxicity. The chain is Fluoride-specific ion channel FluC 2 from Nocardia farcinica (strain IFM 10152).